Reading from the N-terminus, the 425-residue chain is Serine--tRNA ligase (425 aa).

230 to 232 (TAE) is an L-serine binding site. Position 261-263 (261-263 (RAE)) interacts with ATP. E284 serves as a coordination point for L-serine. 348–351 (EISS) is an ATP binding site. L-serine is bound at residue S384.

It belongs to the class-II aminoacyl-tRNA synthetase family. Type-1 seryl-tRNA synthetase subfamily. In terms of assembly, homodimer. The tRNA molecule binds across the dimer.

The protein resides in the cytoplasm. It carries out the reaction tRNA(Ser) + L-serine + ATP = L-seryl-tRNA(Ser) + AMP + diphosphate + H(+). The catalysed reaction is tRNA(Sec) + L-serine + ATP = L-seryl-tRNA(Sec) + AMP + diphosphate + H(+). The protein operates within aminoacyl-tRNA biosynthesis; selenocysteinyl-tRNA(Sec) biosynthesis; L-seryl-tRNA(Sec) from L-serine and tRNA(Sec): step 1/1. Functionally, catalyzes the attachment of serine to tRNA(Ser). Is also able to aminoacylate tRNA(Sec) with serine, to form the misacylated tRNA L-seryl-tRNA(Sec), which will be further converted into selenocysteinyl-tRNA(Sec). This chain is Serine--tRNA ligase, found in Desulforudis audaxviator (strain MP104C).